The primary structure comprises 566 residues: MAGRRLTWISEFIVGALDSDKYPLVKWLDRSTGTFLAPAARNDVIPLDSLQFFIDFKRECLSKGLHPRDLLGSPITAFGKICTTSRRLRRLPGEEYEVVQGINCRRWRLLCAEVKECWWCVHARTHLHSGSSLWEILYQHSVRLEKHRRRPRPFVGENSDSSEEDHPAFCDVPVTQTGAESEDSGDEGPSTRHSASGVQPVDDANADSPGSGDEGPSTRHSDSQPPPADETTVHTDNVEDDLTLLDKESACALMYHVGQEMDMLMRAMCDEDLFDLLGIPEDVIATSQPGGDTDASGVVTEGSIAASAVGAGVEDVYLAGALEAQNVAGEYVLEISDEEVDDGAGLPPASRRRPVVGEFLWDDGPRRHERPTTRRIRHRKLRSAYYRVARPPVMITDRLGVEVFYFGRPAMSLEVERKVFILCSQNPLADISHSCLHSRKGLRVLLPKPDDNNTGPGDVNLLAAVLRSFASGLVIVSLRSGIYVKNLCKSTVLYHGNNPPKKFGVICGLSSRAVLDVFNVAQYRIQGHEHIKKTTVFIGGDPTSAEQFDMVPLVIKLRLRSVTCDD.

Disordered stretches follow at residues 151-170 (PRPF…PAFC) and 176-236 (QTGA…VHTD).

Belongs to the IRF family. As to quaternary structure, interacts with host SKP2. Interacts with host USP7.

Its function is as follows. Plays a role in the inhibition of host immune response. Interferes with the transactivating potential of cellular IRFs IRF3 and IRF7 that play a critical role in the induction of IFNA and IFNB genes. Additionally, interferes with surface major histocompatibility complex class II (MHC-II) antigen presentation. The sequence is that of Viral IRF3-like protein (vIRF-3) from Human herpesvirus 8 type P (isolate GK18) (HHV-8).